Here is a 321-residue protein sequence, read N- to C-terminus: ATP-dependent 6-phosphofructokinase (321 aa).

G12 is a binding site for ATP. Residues 22-26 (RAVVR) and 55-60 (RYSVSD) contribute to the ADP site. ATP is bound by residues 73-74 (RF) and 103-106 (GDGS). Position 104 (D104) interacts with Mg(2+). 127–129 (TID) is a substrate binding site. D129 (proton acceptor) is an active-site residue. R156 provides a ligand contact to ADP. Residues R164 and 171-173 (MGR) contribute to the substrate site. ADP contacts are provided by residues 187 to 189 (GCE) and 215 to 217 (KRH). Residues E224, R245, and 251-254 (HVQR) each bind substrate.

It belongs to the phosphofructokinase type A (PFKA) family. ATP-dependent PFK group I subfamily. Prokaryotic clade 'B1' sub-subfamily. In terms of assembly, homotetramer. Mg(2+) serves as cofactor.

It localises to the cytoplasm. It carries out the reaction beta-D-fructose 6-phosphate + ATP = beta-D-fructose 1,6-bisphosphate + ADP + H(+). It participates in carbohydrate degradation; glycolysis; D-glyceraldehyde 3-phosphate and glycerone phosphate from D-glucose: step 3/4. Allosterically activated by ADP and other diphosphonucleosides, and allosterically inhibited by phosphoenolpyruvate. Catalyzes the phosphorylation of D-fructose 6-phosphate to fructose 1,6-bisphosphate by ATP, the first committing step of glycolysis. The protein is ATP-dependent 6-phosphofructokinase of Actinobacillus succinogenes (strain ATCC 55618 / DSM 22257 / CCUG 43843 / 130Z).